The following is a 277-amino-acid chain: Shikimate dehydrogenase (NADP(+)) (277 aa).

Shikimate contacts are provided by residues 18–20 (SKS) and Thr65. The Proton acceptor role is filled by Lys69. Glu81 serves as a coordination point for NADP(+). Positions 90 and 106 each coordinate shikimate. NADP(+) contacts are provided by residues 130–134 (GAGGA), 154–159 (NRTFSK), and Met217. Position 219 (Tyr219) interacts with shikimate. Gly241 is a binding site for NADP(+).

It belongs to the shikimate dehydrogenase family. Homodimer.

It catalyses the reaction shikimate + NADP(+) = 3-dehydroshikimate + NADPH + H(+). Its pathway is metabolic intermediate biosynthesis; chorismate biosynthesis; chorismate from D-erythrose 4-phosphate and phosphoenolpyruvate: step 4/7. Involved in the biosynthesis of the chorismate, which leads to the biosynthesis of aromatic amino acids. Catalyzes the reversible NADPH linked reduction of 3-dehydroshikimate (DHSA) to yield shikimate (SA). This is Shikimate dehydrogenase (NADP(+)) from Vibrio vulnificus (strain CMCP6).